The primary structure comprises 200 residues: Nitrile hydratase subunit alpha (200 aa).

Residues Cys105, Cys108, Ser109, and Cys110 each contribute to the Fe(3+) site. Cys108 is modified (cysteine sulfinic acid (-SO2H)). Cys110 carries the post-translational modification Cysteine sulfenic acid (-SOH).

Belongs to the nitrile hydratase subunit alpha family. Heterodimer of an alpha and a beta chain. It depends on Fe(3+) as a cofactor. Post-translationally, oxidation on Cys-108 is essential for the activity. Oxidation on Cys-110 stabilizes the Fe-NO ligand coordinated in the inactive form.

The catalysed reaction is an aliphatic primary amide = an aliphatic nitrile + H2O. Its activity is regulated as follows. Inactivated by oxidation of Cys-110 to a sulfenic acid. Its function is as follows. NHase catalyzes the hydration of various nitrile compounds to the corresponding amides. Industrial production of acrylamide is now being developed using some of the enzymes of this class. The polypeptide is Nitrile hydratase subunit alpha (nthA) (Pseudomonas chlororaphis (Pseudomonas aureofaciens)).